The chain runs to 486 residues: Ribosomal RNA small subunit methyltransferase F (486 aa).

Residues 122–128 (ASAPGSK), Glu-146, Asp-173, and Asp-191 contribute to the S-adenosyl-L-methionine site. Cys-244 acts as the Nucleophile in catalysis.

It belongs to the class I-like SAM-binding methyltransferase superfamily. RsmB/NOP family.

The protein resides in the cytoplasm. It carries out the reaction cytidine(1407) in 16S rRNA + S-adenosyl-L-methionine = 5-methylcytidine(1407) in 16S rRNA + S-adenosyl-L-homocysteine + H(+). Specifically methylates the cytosine at position 1407 (m5C1407) of 16S rRNA. The protein is Ribosomal RNA small subunit methyltransferase F of Shewanella loihica (strain ATCC BAA-1088 / PV-4).